The following is a 479-amino-acid chain: Glutamyl-tRNA(Gln) amidotransferase subunit A (479 aa).

Active-site charge relay system residues include Lys-74 and Ser-149. Ser-173 functions as the Acyl-ester intermediate in the catalytic mechanism.

It belongs to the amidase family. GatA subfamily. In terms of assembly, heterotrimer of A, B and C subunits.

The catalysed reaction is L-glutamyl-tRNA(Gln) + L-glutamine + ATP + H2O = L-glutaminyl-tRNA(Gln) + L-glutamate + ADP + phosphate + H(+). In terms of biological role, allows the formation of correctly charged Gln-tRNA(Gln) through the transamidation of misacylated Glu-tRNA(Gln) in organisms which lack glutaminyl-tRNA synthetase. The reaction takes place in the presence of glutamine and ATP through an activated gamma-phospho-Glu-tRNA(Gln). In Cenarchaeum symbiosum (strain A), this protein is Glutamyl-tRNA(Gln) amidotransferase subunit A.